A 148-amino-acid chain; its full sequence is Large ribosomal subunit protein uL15 (148 aa).

Residues 1-51 are disordered; it reads MNLSNLKPAEGSTKTRKRIGRGAGSGLGGTSTRGHKGAKSRSGYSKKVGFE. Positions 21–31 are enriched in gly residues; the sequence is RGAGSGLGGTS.

Belongs to the universal ribosomal protein uL15 family. In terms of assembly, part of the 50S ribosomal subunit.

Its function is as follows. Binds to the 23S rRNA. The sequence is that of Large ribosomal subunit protein uL15 from Bacteroides thetaiotaomicron (strain ATCC 29148 / DSM 2079 / JCM 5827 / CCUG 10774 / NCTC 10582 / VPI-5482 / E50).